The sequence spans 827 residues: Multiphosphoryl transfer protein (827 aa).

The 141-residue stretch at 2–142 folds into the PTS EIIA type-2 domain; the sequence is IPLTSELVAI…AVIVARLTGA (141 aa). Catalysis depends on His62, which acts as the Tele-phosphohistidine intermediate; for EIIA activity. At His62 the chain carries Phosphohistidine; by HPr. An HPr domain is found at 157–245; sequence AQGIDVVVTG…AFEAGLEDEE (89 aa). The active-site Pros-phosphohistidine intermediate; for HPr activity is the His171. His171 is modified (phosphohistidine; by EI). Residues 270-827 form a PTS EI region; it reads EGRTLVGISS…TTAAEVRGLK (558 aa). His457 (tele-phosphohistidine intermediate; for PTS EI activity) is an active-site residue. Position 457 is a phosphohistidine; by autocatalysis (His457). Phosphoenolpyruvate is bound by residues Arg564 and Arg600. 2 residues coordinate Mg(2+): Glu693 and Asp717. Residues 716–717 and Arg727 contribute to the phosphoenolpyruvate site; that span reads ND. The active-site Proton donor is the Cys764.

Belongs to the PEP-utilizing enzyme family. The cofactor is Mg(2+).

It is found in the cytoplasm. It catalyses the reaction L-histidyl-[protein] + phosphoenolpyruvate = N(pros)-phospho-L-histidyl-[protein] + pyruvate. In terms of biological role, the phosphoenolpyruvate-dependent sugar phosphotransferase system (sugar PTS), a major carbohydrate active transport system, catalyzes the phosphorylation of incoming sugar substrates concomitantly with their translocation across the cell membrane. The enzyme II FruAB PTS system is involved in fructose transport. The sequence is that of Multiphosphoryl transfer protein from Rhodobacter capsulatus (Rhodopseudomonas capsulata).